The chain runs to 257 residues: UPF0246 protein Sama_0917 (257 aa).

This sequence belongs to the UPF0246 family.

This chain is UPF0246 protein Sama_0917, found in Shewanella amazonensis (strain ATCC BAA-1098 / SB2B).